A 148-amino-acid chain; its full sequence is Probable glycine cleavage system H protein 2 (148 aa).

The region spanning Thr32–Lys114 is the Lipoyl-binding domain. The residue at position 73 (Lys73) is an N6-lipoyllysine.

It belongs to the GcvH family. In terms of assembly, the glycine cleavage system is composed of four proteins: P, T, L and H. It depends on (R)-lipoate as a cofactor.

In terms of biological role, the glycine cleavage system catalyzes the degradation of glycine. The H protein shuttles the methylamine group of glycine from the P protein to the T protein. The sequence is that of Probable glycine cleavage system H protein 2 from Saccharolobus solfataricus (strain ATCC 35092 / DSM 1617 / JCM 11322 / P2) (Sulfolobus solfataricus).